A 277-amino-acid polypeptide reads, in one-letter code: 4-hydroxy-tetrahydrodipicolinate reductase (277 aa).

NAD(+) contacts are provided by residues 11–16 (GALGRM) and 110–112 (GTT). Histidine 166 serves as the catalytic Proton donor/acceptor. Histidine 167 lines the (S)-2,3,4,5-tetrahydrodipicolinate pocket. Lysine 170 serves as the catalytic Proton donor. Residue 176–177 (GT) participates in (S)-2,3,4,5-tetrahydrodipicolinate binding.

Belongs to the DapB family.

The protein localises to the cytoplasm. It carries out the reaction (S)-2,3,4,5-tetrahydrodipicolinate + NAD(+) + H2O = (2S,4S)-4-hydroxy-2,3,4,5-tetrahydrodipicolinate + NADH + H(+). The enzyme catalyses (S)-2,3,4,5-tetrahydrodipicolinate + NADP(+) + H2O = (2S,4S)-4-hydroxy-2,3,4,5-tetrahydrodipicolinate + NADPH + H(+). Its pathway is amino-acid biosynthesis; L-lysine biosynthesis via DAP pathway; (S)-tetrahydrodipicolinate from L-aspartate: step 4/4. In terms of biological role, catalyzes the conversion of 4-hydroxy-tetrahydrodipicolinate (HTPA) to tetrahydrodipicolinate. The polypeptide is 4-hydroxy-tetrahydrodipicolinate reductase (Synechococcus sp. (strain CC9902)).